Consider the following 331-residue polypeptide: Pyrimidine monooxygenase RutA (331 aa).

FMN is bound by residues 79-80, asparagine 145, glutamate 154, 170-171, and serine 220; these read IK and RY. The interval 300–331 is disordered; sequence WLTEQSQKDTRSGTDTNVRQMADPTSASAFNH. Polar residues predominate over residues 312–331; that stretch reads GTDTNVRQMADPTSASAFNH.

The protein belongs to the NtaA/SnaA/DszA monooxygenase family. RutA subfamily.

The catalysed reaction is uracil + FMNH2 + NADH + O2 = (Z)-3-ureidoacrylate + FMN + NAD(+) + H2O + H(+). It catalyses the reaction thymine + FMNH2 + NADH + O2 = (Z)-2-methylureidoacrylate + FMN + NAD(+) + H2O + H(+). Functionally, catalyzes the pyrimidine ring opening between N-3 and C-4 by an unusual flavin hydroperoxide-catalyzed mechanism, adding oxygen atoms in the process to yield ureidoacrylate peracid, that immediately reacts with FMN forming ureidoacrylate and FMN-N(5)-oxide. The FMN-N(5)-oxide reacts spontaneously with NADH to produce FMN. Requires the flavin reductase RutF to regenerate FMN in vivo. In Escherichia coli O7:K1 (strain IAI39 / ExPEC), this protein is Pyrimidine monooxygenase RutA.